The sequence spans 642 residues: Poly(A) polymerase beta (642 aa).

ATP contacts are provided by residues 101–103 (FGS), Thr-110, 114–116 (DID), Asp-168, Lys-229, Tyr-238, and 247–248 (GV). Positions 114, 116, and 168 each coordinate Mg(2+). Disordered stretches follow at residues 530–553 (SENS…GNPQ) and 620–642 (LVNH…ILGV). Residues 620-636 (LVNHPSRPSGNTATNIP) are compositionally biased toward polar residues.

Belongs to the poly(A) polymerase family. Interacts with GSG1. Mg(2+) serves as cofactor. Mn(2+) is required as a cofactor. As to expression, testis specific.

The protein localises to the cytoplasm. It is found in the nucleus. It carries out the reaction RNA(n) + ATP = RNA(n)-3'-adenine ribonucleotide + diphosphate. This is Poly(A) polymerase beta from Mus musculus (Mouse).